Consider the following 161-residue polypeptide: Nucleotide-binding protein Pcar_0033 (161 aa).

Belongs to the YajQ family.

Nucleotide-binding protein. In Syntrophotalea carbinolica (strain DSM 2380 / NBRC 103641 / GraBd1) (Pelobacter carbinolicus), this protein is Nucleotide-binding protein Pcar_0033.